Reading from the N-terminus, the 316-residue chain is Olfactory receptor 10H3 (316 aa).

Topologically, residues 1 to 25 (MPGQNYRTISEFILSGFSAFPQQLL) are extracellular. The helical transmembrane segment at 26–46 (PVLFLLYLLMFLFTLLGNLLI) threads the bilayer. Residues 47-54 (MATVWIER) lie on the Cytoplasmic side of the membrane. Residues 55–75 (RLHTPMYLFLCALSISEILFT) form a helical membrane-spanning segment. Residues 76–99 (VAITPRMLADLLFTHRSITFVACA) are Extracellular-facing. Cysteines 98 and 190 form a disulfide. The helical transmembrane segment at 100–120 (IQMFFSFMFGFTHSFLLMVMG) threads the bilayer. Residues 121 to 139 (YDHYVTICHPLHYNMLMSP) lie on the Cytoplasmic side of the membrane. A helical transmembrane segment spans residues 140–160 (RGCAHLVAWTWAGGSVMGMMV). At 161–197 (TMMVFHLTFCGSNVIHHFLCHVLSLLKLACGSKTSSV) the chain is on the extracellular side. Residues 198–218 (IMGVMLVCVTALIGCLFLIIL) traverse the membrane as a helical segment. Residues 219 to 238 (SFVFIVAAILRIPSAEGRHK) lie on the Cytoplasmic side of the membrane. The chain crosses the membrane as a helical span at residues 239-259 (TFSTCVSHLTVVVMHYSFASL). At 260-272 (IYLKPKGLHSMYS) the chain is on the extracellular side. A helical transmembrane segment spans residues 273–293 (DALMATTYTVFTPFLSPIIFS). Over 294–316 (LRNKELKNAINKNFCRRFCPLSS) the chain is Cytoplasmic.

It belongs to the G-protein coupled receptor 1 family.

It localises to the cell membrane. In terms of biological role, odorant receptor. The polypeptide is Olfactory receptor 10H3 (OR10H3) (Homo sapiens (Human)).